A 54-amino-acid chain; its full sequence is Large ribosomal subunit protein bL32c (54 aa).

Positions 1-25 are enriched in basic residues; it reads MAVPKKRTSKAKKNSRKANWKRKAA. Positions 1–26 are disordered; it reads MAVPKKRTSKAKKNSRKANWKRKAAK.

It belongs to the bacterial ribosomal protein bL32 family.

The protein resides in the plastid. Its subcellular location is the chloroplast. This chain is Large ribosomal subunit protein bL32c, found in Thalassiosira pseudonana (Marine diatom).